We begin with the raw amino-acid sequence, 244 residues long: MAGHSKWAQIKRKKGANDKKRSAMYSKHIRAIQAAVRSGGSGDPAGNLSLKNAIAAAKTDTVPADNIENAIKRAVGAGEGAAEYKEQTYEGYGPGGTAIFIETLTDNVNRTVADIRAVFNKRGGSMGNSGSVAWQFEKKGIILLRDASEAAQEVAIENGAEDIQESDEGLEISTAPNDLYAVQDALSAAGYAVESGQITMLPTNTVAVAGDDARKLLTLVEYLEELDDVQNVYTNADLPEDEED.

Residues 1–23 are disordered; the sequence is MAGHSKWAQIKRKKGANDKKRSA.

This sequence belongs to the TACO1 family.

It is found in the cytoplasm. The sequence is that of Probable transcriptional regulatory protein DR_2548 from Deinococcus radiodurans (strain ATCC 13939 / DSM 20539 / JCM 16871 / CCUG 27074 / LMG 4051 / NBRC 15346 / NCIMB 9279 / VKM B-1422 / R1).